A 170-amino-acid polypeptide reads, in one-letter code: Small ribosomal subunit protein uS3mA (170 aa).

The N-terminal 30 residues, 1 to 30 (MAAPVMSALGRLQGLIRTERSLLTHVQSRC), are a transit peptide targeting the mitochondrion.

This sequence belongs to the universal ribosomal protein uS3 family. Component of the mitochondrial ribosome small subunit (28S) which comprises a 12S rRNA and about 30 distinct proteins.

The protein resides in the mitochondrion. In Xenopus laevis (African clawed frog), this protein is Small ribosomal subunit protein uS3mA (mrps24-a).